Reading from the N-terminus, the 130-residue chain is Small ribosomal subunit protein uS11c (130 aa).

Belongs to the universal ribosomal protein uS11 family. In terms of assembly, part of the 30S ribosomal subunit.

The protein resides in the plastid. It is found in the chloroplast. The polypeptide is Small ribosomal subunit protein uS11c (Physcomitrium patens (Spreading-leaved earth moss)).